Consider the following 487-residue polypeptide: ATP synthase subunit beta, plastid (487 aa).

An ATP-binding site is contributed by 169–176 (GGAGVGKT).

Belongs to the ATPase alpha/beta chains family. As to quaternary structure, F-type ATPases have 2 components, CF(1) - the catalytic core - and CF(0) - the membrane proton channel. CF(1) has five subunits: alpha(3), beta(3), gamma(1), delta(1), epsilon(1). CF(0) has four main subunits: a(1), b(1), b'(1) and c(9-12).

It is found in the plastid membrane. It catalyses the reaction ATP + H2O + 4 H(+)(in) = ADP + phosphate + 5 H(+)(out). Produces ATP from ADP in the presence of a proton gradient across the membrane. The catalytic sites are hosted primarily by the beta subunits. This chain is ATP synthase subunit beta, plastid (atpB), found in Cuscuta pentagona (Five-angled dodder).